The chain runs to 601 residues: MDNRRLLYSISISLVILVLFQVIASYVLPPPKKAPPHPATQTAQTQPVSGQPAPGVPAPSAVPPAAAPGGVAAKIPAGPRLAISTPLLRGSMSLVGARLDDLVLTRYHQTVKKTSPLVQLLSQAGTAKSYYVQFGWDAAPGSSLKVPGPDTVWTSSGGDLSPAHPVTLSWNNGAGVTFELKLAVDRQYLFTVQQRVINHGAAAVEVYPWSRIRRDFLPEEPGSFTLHKGPIGVFHGTLHEMGYEGVKSGGKHPAAGDAPGTAYQTTNLGGWAGITGKYWLTALIPSQGREVIGAYRYLADPGQPEHGGYQVDYMTAKPVDAAPGATASTTTHVFAGAKVLSILSHYETQYRIPLFERAIDFGWFFFLTKPIFIALDYLAGVFGNMGVAIIVFTIGLKLVLFPLVRTSYRSMARMRAITPKVQALRERYKDDQMQQQKEIMALYKAEGVNPAAGCLPMLPQIPIFFSLYKVIFISIGMRHAPFVLWIHDLSAEDPTNIFNLFGLLPFHPSALSPFLHLGILPIIMGITMWGQQRLNPPPPDPTQAKMMQFMPVIFTFMLGRFAAGLVLYYCVNNTLTILQQWTIMRGTNAAPRAAANLNAKG.

A helical transmembrane segment spans residues 10-30; that stretch reads ISISLVILVLFQVIASYVLPP. The interval 34-63 is disordered; the sequence is APPHPATQTAQTQPVSGQPAPGVPAPSAVP. Low complexity predominate over residues 39 to 53; that stretch reads ATQTAQTQPVSGQPA. Residues 54-63 are compositionally biased toward pro residues; the sequence is PGVPAPSAVP. The next 4 membrane-spanning stretches (helical) occupy residues 382 to 404, 455 to 475, 510 to 530, and 549 to 569; these read FGNM…FPLV, LPML…FISI, ALSP…TMWG, and FMPV…VLYY.

The protein belongs to the OXA1/ALB3/YidC family. Type 1 subfamily. As to quaternary structure, interacts with the Sec translocase complex via SecD. Specifically interacts with transmembrane segments of nascent integral membrane proteins during membrane integration.

It is found in the cell inner membrane. Its function is as follows. Required for the insertion and/or proper folding and/or complex formation of integral membrane proteins into the membrane. Involved in integration of membrane proteins that insert both dependently and independently of the Sec translocase complex, as well as at least some lipoproteins. Aids folding of multispanning membrane proteins. The protein is Membrane protein insertase YidC of Acidiphilium cryptum (strain JF-5).